A 28-amino-acid polypeptide reads, in one-letter code: Putative antitoxin AF_1079 (28 aa).

The protein belongs to the UPF0165 family.

Its function is as follows. Possibly the antitoxin component of a type II toxin-antitoxin (TA) system. The polypeptide is Putative antitoxin AF_1079 (Archaeoglobus fulgidus (strain ATCC 49558 / DSM 4304 / JCM 9628 / NBRC 100126 / VC-16)).